Reading from the N-terminus, the 713-residue chain is Probable arginine--tRNA ligase, cytoplasmic (713 aa).

The interval 74–113 (KNKKNGVKATSTSSPSSSTSAPAEKKAKKDGKTGGAPPKQ) is disordered. The span at 81–95 (KATSTSSPSSSTSAP) shows a compositional bias: low complexity. The span at 96 to 105 (AEKKAKKDGK) shows a compositional bias: basic and acidic residues. L-arginine is bound by residues 252–254 (SPN), His-263, Tyr-438, Asp-442, and Gln-466. Positions 252 to 263 (SPNIAKEMHVGH) match the 'HIGH' region motif. The tract at residues 583 to 597 (NTAVYLLYAYTRIQS) is interaction with tRNA.

This sequence belongs to the class-I aminoacyl-tRNA synthetase family.

The protein localises to the cytoplasm. Its subcellular location is the cytosol. It carries out the reaction tRNA(Arg) + L-arginine + ATP = L-arginyl-tRNA(Arg) + AMP + diphosphate. Functionally, forms part of a macromolecular complex that catalyzes the attachment of specific amino acids to cognate tRNAs during protein synthesis. The sequence is that of Probable arginine--tRNA ligase, cytoplasmic from Caenorhabditis elegans.